Reading from the N-terminus, the 365-residue chain is Flagellar P-ring protein (365 aa).

The first 19 residues, 1 to 19, serve as a signal peptide directing secretion; it reads MIKFLSALILLLVTTAAQA.

This sequence belongs to the FlgI family. The basal body constitutes a major portion of the flagellar organelle and consists of four rings (L,P,S, and M) mounted on a central rod.

It localises to the periplasm. The protein resides in the bacterial flagellum basal body. Functionally, assembles around the rod to form the L-ring and probably protects the motor/basal body from shearing forces during rotation. This Shigella boydii serotype 4 (strain Sb227) protein is Flagellar P-ring protein.